The following is a 504-amino-acid chain: O-fucosyltransferase 39 (504 aa).

A helical; Signal-anchor for type II membrane protein transmembrane segment spans residues 11-27; that stretch reads WILSMFFFVVLFCNNVS. Residue N115 is glycosylated (N-linked (GlcNAc...) asparagine). 288 to 290 lines the substrate pocket; sequence HLR. N359 and N460 each carry an N-linked (GlcNAc...) asparagine glycan.

This sequence belongs to the glycosyltransferase GT106 family.

It is found in the membrane. It participates in glycan metabolism. The polypeptide is O-fucosyltransferase 39 (Arabidopsis thaliana (Mouse-ear cress)).